The sequence spans 213 residues: Histone H1.1 (213 aa).

Residues 1–43 (MSETAPVAQAASTATEKPAAAKKTKKPAKAAAPRKKPAGPSVS) form a disordered region. S2 bears the N-acetylserine mark. S2 and S12 each carry phosphoserine. A compositionally biased stretch (low complexity) spans 8–18 (AQAASTATEKP). Position 17 is an N6-acetyllysine (K17). A compositionally biased stretch (basic residues) spans 20–37 (AAKKTKKPAKAAAPRKKP). The residue at position 36 (K36) is an N6-(beta-hydroxybutyryl)lysine. The 74-residue stretch at 38–111 (AGPSVSELIV…GAAGSFKLNK (74 aa)) folds into the H15 domain. At S43 the chain carries Phosphoserine. An N6-(beta-hydroxybutyryl)lysine modification is found at K54. R56 is subject to Citrulline. Position 66 is an N6-(beta-hydroxybutyryl)lysine (K66). The residue at position 67 (S67) is a Phosphoserine. Residue K77 is modified to N6-acetyllysine. K87 carries the N6-(beta-hydroxybutyryl)lysine modification. K92 carries the post-translational modification N6-(beta-hydroxybutyryl)lysine; alternate. Residue K92 is modified to N6-acetyllysine; alternate. Phosphoserine is present on S106. K108 carries the post-translational modification N6-(beta-hydroxybutyryl)lysine. Residues 112–213 (KAESKAITTK…KPKKAAPKKK (102 aa)) are disordered. Over residues 120-144 (TKVSVKAKASGAAKKPKKTAGAAAK) the composition is skewed to low complexity. K121 is modified (N6-acetyllysine). Basic residues-rich tracts occupy residues 145–178 (KTVK…KKVA) and 185–213 (KAVK…PKKK). Position 201 is a phosphothreonine (T201).

The protein belongs to the histone H1/H5 family. Interacts with DFFB. In terms of processing, H1 histones are progressively phosphorylated during the cell cycle, becoming maximally phosphorylated during late G2 phase and M phase, and being dephosphorylated sharply thereafter. Post-translationally, citrullination at Arg-56 (H1R54ci) by PADI4 takes place within the DNA-binding site of H1 and results in its displacement from chromatin and global chromatin decondensation, thereby promoting pluripotency and stem cell maintenance. Hydroxybutyrylation of histones is induced by starvation. As to expression, restricted to thymus, testis and spleen. Present also in lymphocytic and neuronal cells. Increases in testis starting with a low level at day 5 and reaching high concentrations in 20-day old and adult animals.

It localises to the nucleus. Its subcellular location is the chromosome. Its function is as follows. Histone H1 protein binds to linker DNA between nucleosomes forming the macromolecular structure known as the chromatin fiber. Histones H1 are necessary for the condensation of nucleosome chains into higher-order structured fibers. Also acts as a regulator of individual gene transcription through chromatin remodeling, nucleosome spacing and DNA methylation. The polypeptide is Histone H1.1 (Mus musculus (Mouse)).